The following is a 445-amino-acid chain: 3-phosphoshikimate 1-carboxyvinyltransferase (445 aa).

Lys-28, Ser-29, and Arg-33 together coordinate 3-phosphoshikimate. Lys-28 serves as a coordination point for phosphoenolpyruvate. Residues Gly-102 and Arg-130 each coordinate phosphoenolpyruvate. Ser-179, Ser-180, Gln-181, Glu-330, and His-357 together coordinate 3-phosphoshikimate. Gln-181 serves as a coordination point for phosphoenolpyruvate. Residue Glu-330 is the Proton acceptor of the active site. Arg-361, Arg-405, and Lys-430 together coordinate phosphoenolpyruvate.

It belongs to the EPSP synthase family. As to quaternary structure, monomer.

It localises to the cytoplasm. The enzyme catalyses 3-phosphoshikimate + phosphoenolpyruvate = 5-O-(1-carboxyvinyl)-3-phosphoshikimate + phosphate. The protein operates within metabolic intermediate biosynthesis; chorismate biosynthesis; chorismate from D-erythrose 4-phosphate and phosphoenolpyruvate: step 6/7. Catalyzes the transfer of the enolpyruvyl moiety of phosphoenolpyruvate (PEP) to the 5-hydroxyl of shikimate-3-phosphate (S3P) to produce enolpyruvyl shikimate-3-phosphate and inorganic phosphate. The chain is 3-phosphoshikimate 1-carboxyvinyltransferase from Bifidobacterium longum (strain DJO10A).